We begin with the raw amino-acid sequence, 461 residues long: Na(+)/H(+) antiporter NhaA (461 aa).

The tract at residues 1-23 (MILSTQRLGRFMSPAPTPAPDAK) is disordered. The next 12 helical transmembrane spans lie at 48–68 (VGGA…NSPV), 89–109 (LSLG…LVGL), 127–147 (IVPV…YAAV), 157–177 (GWAI…AIIG), 186–206 (IFLL…IAFF), 211–231 (IQAA…FLAQ), 236–256 (FFGA…IVTW), 257–277 (ALVH…GFAV), 305–325 (ISAG…AVGG), 339–359 (IGII…TTWI), 374–394 (WIDV…SLLV), and 408–428 (HAKV…TVVL).

Belongs to the NhaA Na(+)/H(+) (TC 2.A.33) antiporter family.

It localises to the cell membrane. The enzyme catalyses Na(+)(in) + 2 H(+)(out) = Na(+)(out) + 2 H(+)(in). In terms of biological role, na(+)/H(+) antiporter that extrudes sodium in exchange for external protons. This is Na(+)/H(+) antiporter NhaA from Arthrobacter sp. (strain FB24).